We begin with the raw amino-acid sequence, 334 residues long: Phosphate acyltransferase (334 aa).

The protein belongs to the PlsX family. In terms of assembly, homodimer. Probably interacts with PlsY.

The protein resides in the cytoplasm. It carries out the reaction a fatty acyl-[ACP] + phosphate = an acyl phosphate + holo-[ACP]. It participates in lipid metabolism; phospholipid metabolism. Its function is as follows. Catalyzes the reversible formation of acyl-phosphate (acyl-PO(4)) from acyl-[acyl-carrier-protein] (acyl-ACP). This enzyme utilizes acyl-ACP as fatty acyl donor, but not acyl-CoA. In Halothermothrix orenii (strain H 168 / OCM 544 / DSM 9562), this protein is Phosphate acyltransferase.